Consider the following 338-residue polypeptide: Auxin-responsive protein IAA9 (338 aa).

The interval methionine 1–arginine 25 is disordered. Over residues serine 9–asparagine 21 the composition is skewed to low complexity. Positions leucine 68–leucine 72 match the EAR-like (transcriptional repression) motif. The interval alanine 150–glycine 186 is disordered. A compositionally biased stretch (low complexity) spans serine 168–alanine 180. The PB1 domain occupies alanine 216–glycine 318.

This sequence belongs to the Aux/IAA family. Homodimers and heterodimers. Interacts with TPL. In terms of processing, phosphorylated by phytochrome A in vitro. Highly expressed in the whole plant.

Its subcellular location is the nucleus. In terms of biological role, aux/IAA proteins are short-lived transcriptional factors that function as repressors of early auxin response genes at low auxin concentrations. Repression is thought to result from the interaction with auxin response factors (ARFs), proteins that bind to the auxin-responsive promoter element (AuxRE). Formation of heterodimers with ARF proteins may alter their ability to modulate early auxin response genes expression. This is Auxin-responsive protein IAA9 (IAA9) from Arabidopsis thaliana (Mouse-ear cress).